The primary structure comprises 132 residues: Small ribosomal subunit protein uS11 (132 aa).

Belongs to the universal ribosomal protein uS11 family. As to quaternary structure, part of the 30S ribosomal subunit. Interacts with proteins S7 and S18. Binds to IF-3.

In terms of biological role, located on the platform of the 30S subunit, it bridges several disparate RNA helices of the 16S rRNA. Forms part of the Shine-Dalgarno cleft in the 70S ribosome. This Chlamydia abortus (strain DSM 27085 / S26/3) (Chlamydophila abortus) protein is Small ribosomal subunit protein uS11.